A 456-amino-acid polypeptide reads, in one-letter code: Bifunctional protein GlmU (456 aa).

Residues 1–229 (MLNSAMSVVI…ISETDGVNNR (229 aa)) form a pyrophosphorylase region. UDP-N-acetyl-alpha-D-glucosamine-binding positions include 11–14 (LAAG), Lys-25, Gln-76, 81–82 (GT), 103–105 (YGD), Gly-140, Glu-154, Asn-169, and Asn-227. Asp-105 provides a ligand contact to Mg(2+). Position 227 (Asn-227) interacts with Mg(2+). Positions 230–250 (LQLSRLERIYQAEQAEKLLLS) are linker. An N-acetyltransferase region spans residues 251–456 (GVMLRDPARF…QGWQRPVKKK (206 aa)). 2 residues coordinate UDP-N-acetyl-alpha-D-glucosamine: Arg-333 and Lys-351. Catalysis depends on His-363, which acts as the Proton acceptor. 2 residues coordinate UDP-N-acetyl-alpha-D-glucosamine: Tyr-366 and Asn-377. Acetyl-CoA is bound by residues Ala-380, 386-387 (NY), Ser-405, Ala-423, and Arg-440.

This sequence in the N-terminal section; belongs to the N-acetylglucosamine-1-phosphate uridyltransferase family. In the C-terminal section; belongs to the transferase hexapeptide repeat family. In terms of assembly, homotrimer. Requires Mg(2+) as cofactor.

It is found in the cytoplasm. The catalysed reaction is alpha-D-glucosamine 1-phosphate + acetyl-CoA = N-acetyl-alpha-D-glucosamine 1-phosphate + CoA + H(+). It carries out the reaction N-acetyl-alpha-D-glucosamine 1-phosphate + UTP + H(+) = UDP-N-acetyl-alpha-D-glucosamine + diphosphate. It functions in the pathway nucleotide-sugar biosynthesis; UDP-N-acetyl-alpha-D-glucosamine biosynthesis; N-acetyl-alpha-D-glucosamine 1-phosphate from alpha-D-glucosamine 6-phosphate (route II): step 2/2. The protein operates within nucleotide-sugar biosynthesis; UDP-N-acetyl-alpha-D-glucosamine biosynthesis; UDP-N-acetyl-alpha-D-glucosamine from N-acetyl-alpha-D-glucosamine 1-phosphate: step 1/1. Its pathway is bacterial outer membrane biogenesis; LPS lipid A biosynthesis. In terms of biological role, catalyzes the last two sequential reactions in the de novo biosynthetic pathway for UDP-N-acetylglucosamine (UDP-GlcNAc). The C-terminal domain catalyzes the transfer of acetyl group from acetyl coenzyme A to glucosamine-1-phosphate (GlcN-1-P) to produce N-acetylglucosamine-1-phosphate (GlcNAc-1-P), which is converted into UDP-GlcNAc by the transfer of uridine 5-monophosphate (from uridine 5-triphosphate), a reaction catalyzed by the N-terminal domain. The polypeptide is Bifunctional protein GlmU (Salmonella agona (strain SL483)).